Here is a 197-residue protein sequence, read N- to C-terminus: uncharacterized protein (197 aa).

A run of 4 helical transmembrane segments spans residues 12–41 (LCIFGIGLFVPATGTFACGLLLVLGFWVLF), 78–100 (LIQGFFPLVRMMLCPYLFITALS), 120–142 (VGVFGIMIAGISLVRELVAFGCV), and 162–184 (IRFAATGAGTLISCGIVLWIFRS).

It is found in the cell membrane. This is an uncharacterized protein from Treponema pallidum (strain Nichols).